Here is a 509-residue protein sequence, read N- to C-terminus: Citrinin biosynthesis transcriptional activator mrl3 (509 aa).

Residues 1–22 form a disordered region; that stretch reads MASTAHRQPSRPTTRQRQRTGR. Positions 24–51 form a DNA-binding region, zn(2)-C6 fungal-type; that stretch reads CEECRRRKLRCDGQQPRCGVCVDSGVTC. The disordered stretch occupies residues 97-143; sequence STPLTNDHHDGCSVSSASSRSDSNPPPTVSEPDMSLPNTTTSVSSAP. Low complexity predominate over residues 109–119; the sequence is SVSSASSRSDS. Positions 132 to 143 are enriched in polar residues; that stretch reads LPNTTTSVSSAP.

The protein resides in the nucleus. Transcription factor that regulates the expression of the gene cluster that mediates the biosynthesis of the mycotoxin citrinin, a hepato-nephrotoxic compound to humans due to inhibition of respiration complex III. In Monascus ruber (Mold), this protein is Citrinin biosynthesis transcriptional activator mrl3.